The sequence spans 240 residues: Probable transcriptional regulatory protein Csal_0810 (240 aa).

It belongs to the TACO1 family.

The protein localises to the cytoplasm. In Chromohalobacter salexigens (strain ATCC BAA-138 / DSM 3043 / CIP 106854 / NCIMB 13768 / 1H11), this protein is Probable transcriptional regulatory protein Csal_0810.